Consider the following 775-residue polypeptide: Serine/threonine-protein kinase ppk6 (775 aa).

Residues serine 132 and serine 134 each carry the phosphoserine modification. The Protein kinase domain occupies 503–758 (YTTIKELGIG…IEETLQHHWF (256 aa)). ATP is bound by residues 509–517 (LGIGAYGQV) and lysine 533. The Proton acceptor role is filled by aspartate 636.

The protein belongs to the protein kinase superfamily. Ser/Thr protein kinase family.

The protein localises to the cytoplasm. The protein resides in the nucleus. It catalyses the reaction L-seryl-[protein] + ATP = O-phospho-L-seryl-[protein] + ADP + H(+). It carries out the reaction L-threonyl-[protein] + ATP = O-phospho-L-threonyl-[protein] + ADP + H(+). In Schizosaccharomyces pombe (strain 972 / ATCC 24843) (Fission yeast), this protein is Serine/threonine-protein kinase ppk6 (ppk6).